We begin with the raw amino-acid sequence, 262 residues long: 5-methyltetrahydrofolate:corrinoid/iron-sulfur protein co-methyltransferase (262 aa).

Positions 1 to 246 constitute a Pterin-binding domain; sequence MLIIGERING…ETAATAEILL (246 aa). (6S)-5-methyl-5,6,7,8-tetrahydrofolate contacts are provided by Asn96 and Asp160. Position 184 (Lys184) interacts with Ca(2+). Residues Asn199, Gln202, and Arg207 each contribute to the (6S)-5-methyl-5,6,7,8-tetrahydrofolate site. 202 to 203 contributes to the methylcob(III)alamin binding site; that stretch reads QN. Ca(2+) contacts are provided by Gly222 and Asp224.

Belongs to the vitamin-B12 dependent methionine synthase family. As to quaternary structure, heterohexamer composed of 2 subunits of AcsC, 2 subunits of AcsD and 2 subunits of AcsE. It depends on Ca(2+) as a cofactor.

It catalyses the reaction methyl-Co(III)-[corrinoid Fe-S protein] + (6S)-5,6,7,8-tetrahydrofolate = Co(I)-[corrinoid Fe-S protein] + (6S)-5-methyl-5,6,7,8-tetrahydrofolate + H(+). Methyltransferase that mediates the transfer of a N5-methyl group of (6S)-methyltetrahydrofolate to the 5-methoxybenzimidazolylcobamide cofactor of a corrinoid/Fe-S protein (AcsC/AcsD) in the anaerobic acetyl-CoA pathway (Wood-Ljungdahl pathway) of carbon monoxide and carbon dioxide fixation. The protein is 5-methyltetrahydrofolate:corrinoid/iron-sulfur protein co-methyltransferase (acsE) of Moorella thermoacetica (Clostridium thermoaceticum).